We begin with the raw amino-acid sequence, 187 residues long: Avirulence protein ATR39-2 (187 aa).

The first 20 residues, 1-20, serve as a signal peptide directing secretion; it reads MVKCTPLLALTVIVSAGSDA. The short motif at 49 to 66 is the RxLR-dEER element; sequence RVLRASDVPNEVAAGESR.

The protein belongs to the RxLR effector family.

Its subcellular location is the secreted. It localises to the host cell. Its function is as follows. Secreted effector that acts as an elicitor of hypersensitive response (HR) specifically on plants carrying defense protein RPP39. The allele ATR39-1 is recognized by RPP39, whereas the ATR39-2 allele is nor recognized. The polypeptide is Avirulence protein ATR39-2 (Hyaloperonospora arabidopsidis (strain Emoy2) (Downy mildew agent)).